A 465-amino-acid chain; its full sequence is MLPLVALVGRPNVGKSTLFNALTLTRDALVHDQPGVTRDRHYGVCRIDGQPLFAVVDTGGMVGKEDGLAGATARQARLAAAEADVVLFVVNVREGVSALDDDILAWLRKLSQPTLLVINKIDGVSDATVHSEFAHYGFSDVVPVSAAHRQGLDDLIEQVLAWLPERGIGEALDEDSERIHIAFVGRPNVGKSTLVNRLLGEERMIVSDVPGTTRDSITVDLERDECRYRLVDTAGLRRKSKVEEAVEKFSAFKTLQVIEQCQVAVLLLDAGEGVTDQDATVLAAILDAGKALVVAMNKWDGLGTYQREQAEDLLSRKLGFVNWAEVVRLSAKHGSGLRELFRAIHRAHVSALRQFSTSEVNKALEIAYQTAPPPSIRGHVSKLRYVHPAGSNPPTFIVHGTRLKVLPDTYKRYLENFFRKRFKLVGTPVRFLFREGDNPYEGRKNVLSERQIQRRRRLMRHVKRK.

EngA-type G domains are found at residues 3–167 (PLVA…PERG) and 179–352 (IHIA…VSAL). GTP-binding positions include 9-16 (GRPNVGKS), 57-61 (DTGGM), 119-122 (NKID), 185-192 (GRPNVGKS), 232-236 (DTAGL), and 297-300 (NKWD). Positions 353–437 (RQFSTSEVNK…PVRFLFREGD (85 aa)) constitute a KH-like domain.

The protein belongs to the TRAFAC class TrmE-Era-EngA-EngB-Septin-like GTPase superfamily. EngA (Der) GTPase family. Associates with the 50S ribosomal subunit.

In terms of biological role, GTPase that plays an essential role in the late steps of ribosome biogenesis. The polypeptide is GTPase Der (Xylella fastidiosa (strain 9a5c)).